A 1247-amino-acid chain; its full sequence is ABC transporter B family member 14 (1247 aa).

The 290-residue stretch at 48 to 337 folds into the ABC transmembrane type-1 1 domain; sequence MFLGGLGTCI…AVPSLSAISK (290 aa). A run of 6 helical transmembrane segments spans residues 49–69, 95–115, 172–192, 196–216, 277–297, and 315–335; these read FLGGLGTCIHGGTLPLFFVFF, LYLVYLGLVNLVSAWIGVACW, HVLRYLCQFIAGFVIGFLSVW, LLTLGVVPLIAIAGGGYAIVM, LGVGLTYSLLFCAWALLFWYA, and ILNVIYSGFALGQAVPSLSAI. 2 N-linked (GlcNAc...) asparagine glycosylation sites follow: Asn-362 and Asn-392. Residues 373 to 608 enclose the ABC transporter 1 domain; the sequence is IEFCGVSFAY…GGDYATLVNC (236 aa). 407–414 contacts ATP; the sequence is GPSGSGKS. An ABC transmembrane type-1 2 domain is found at 679–971; that stretch reads EWLYALLGSI…TLALTPDIVK (293 aa). Helical transmembrane passes span 680–700 and 727–747; these read WLYALLGSIGAVLAGSQPALF and AIIFVGAGIVTAPIYILQHYF. Asn-780 carries an N-linked (GlcNAc...) asparagine glycan. 3 helical membrane passes run 807 to 824, 830 to 850, and 915 to 935; these read IVQNLSLTITALALAFFY, AVVTACFPLLIAASLTEQLFL, and LSQCLAFCSYALGLWYISVLI. The N-linked (GlcNAc...) asparagine glycan is linked to Asn-938. The chain crosses the membrane as a helical span at residues 949–969; the sequence is FMVLLVTAYSVAETLALTPDI. The ABC transporter 2 domain maps to 1006 to 1242; that stretch reads IEFRNVSFAY…SDGFYKKLTS (237 aa). Asn-1010 is a glycosylation site (N-linked (GlcNAc...) asparagine). ATP is bound at residue 1041 to 1048; sequence GPSGSGKS. Asn-1108 carries an N-linked (GlcNAc...) asparagine glycan.

The protein belongs to the ABC transporter superfamily. ABCB family. Multidrug resistance exporter (TC 3.A.1.201) subfamily.

It localises to the membrane. The protein is ABC transporter B family member 14 (ABCB14) of Arabidopsis thaliana (Mouse-ear cress).